We begin with the raw amino-acid sequence, 250 residues long: 2,3-bisphosphoglycerate-dependent phosphoglycerate mutase (250 aa).

Residues 10–17 (RHGESQWN), 23–24 (TG), Arg-62, 89–92 (ERHY), Lys-100, 116–117 (RR), and 185–186 (GN) each bind substrate. His-11 acts as the Tele-phosphohistidine intermediate in catalysis. Glu-89 serves as the catalytic Proton donor/acceptor.

The protein belongs to the phosphoglycerate mutase family. BPG-dependent PGAM subfamily. In terms of assembly, homodimer.

It catalyses the reaction (2R)-2-phosphoglycerate = (2R)-3-phosphoglycerate. It functions in the pathway carbohydrate degradation; glycolysis; pyruvate from D-glyceraldehyde 3-phosphate: step 3/5. In terms of biological role, catalyzes the interconversion of 2-phosphoglycerate and 3-phosphoglycerate. The chain is 2,3-bisphosphoglycerate-dependent phosphoglycerate mutase from Salmonella agona (strain SL483).